The following is a 31-amino-acid chain: Photosystem II reaction center protein T (31 aa).

The chain crosses the membrane as a helical span at residues 3–23 (SFAYVLILTLAIATLFFAIAF).

This sequence belongs to the PsbT family. As to quaternary structure, PSII is composed of 1 copy each of membrane proteins PsbA, PsbB, PsbC, PsbD, PsbE, PsbF, PsbH, PsbI, PsbJ, PsbK, PsbL, PsbM, PsbT, PsbX, PsbY, PsbZ, Psb30/Ycf12, peripheral proteins PsbO, CyanoQ (PsbQ), PsbU, PsbV and a large number of cofactors. It forms dimeric complexes.

It is found in the cellular thylakoid membrane. Functionally, found at the monomer-monomer interface of the photosystem II (PS II) dimer, plays a role in assembly and dimerization of PSII. PSII is a light-driven water plastoquinone oxidoreductase, using light energy to abstract electrons from H(2)O, generating a proton gradient subsequently used for ATP formation. This chain is Photosystem II reaction center protein T, found in Parasynechococcus marenigrum (strain WH8102).